Here is a 213-residue protein sequence, read N- to C-terminus: 2-C-methyl-D-erythritol 4-phosphate cytidylyltransferase (213 aa).

This sequence belongs to the IspD/TarI cytidylyltransferase family. IspD subfamily.

The enzyme catalyses 2-C-methyl-D-erythritol 4-phosphate + CTP + H(+) = 4-CDP-2-C-methyl-D-erythritol + diphosphate. Its pathway is isoprenoid biosynthesis; isopentenyl diphosphate biosynthesis via DXP pathway; isopentenyl diphosphate from 1-deoxy-D-xylulose 5-phosphate: step 2/6. Catalyzes the formation of 4-diphosphocytidyl-2-C-methyl-D-erythritol from CTP and 2-C-methyl-D-erythritol 4-phosphate (MEP). This chain is 2-C-methyl-D-erythritol 4-phosphate cytidylyltransferase, found in Thermus thermophilus (strain ATCC BAA-163 / DSM 7039 / HB27).